Reading from the N-terminus, the 263-residue chain is 4-hydroxy-2-oxo-heptane-1,7-dioate aldolase (263 aa).

His-45 serves as the catalytic Proton acceptor. Gln-147 contacts substrate. An a divalent metal cation-binding site is contributed by Glu-149. Residues Ala-174 and Asp-175 each contribute to the substrate site. Residue Asp-175 participates in a divalent metal cation binding.

This sequence belongs to the HpcH/HpaI aldolase family. Homohexamer; trimer of dimers. Requires a divalent metal cation as cofactor.

The catalysed reaction is 4-hydroxy-2-oxoheptanedioate = succinate semialdehyde + pyruvate. It participates in aromatic compound metabolism; 4-hydroxyphenylacetate degradation; pyruvate and succinate semialdehyde from 4-hydroxyphenylacetate: step 7/7. Functionally, catalyzes the reversible retro-aldol cleavage of 4-hydroxy-2-ketoheptane-1,7-dioate (HKHD) to pyruvate and succinic semialdehyde. This is 4-hydroxy-2-oxo-heptane-1,7-dioate aldolase from Salmonella typhimurium (strain LT2 / SGSC1412 / ATCC 700720).